Reading from the N-terminus, the 610-residue chain is MCGIISAISKKNVTNILIEGMKRLEYRGYDSSGLAIINKKKEIIRLRSQGKIKNIINLIHKTKQLIGNIGIAHTRWATHGLALKKNAHPHVSKNIAIVHNGIIENYLNIKTKLQKNGYIFTSDTDTEVIAHLIHYEQNKNNKSLLKTIQTVILKLTGSYSMVIMDRYHPNILIAIRSGSPLLIGLGKQENFISSDQLSLLKITKKFIYLNEGDIAILSHKKITIFNKNSILVHRPIVISNIQNDSITKGHYQHYMKKEIYEQPYAIKNAIRNRITKNEKIQFSELNNNAHALLLKIEHIDIIACGTSYNAGMVSKYWFESLSKISCNVEIASEFCHRKFIVKKNSLLLILSQSGETADSLTALRNSKKHEYLGSLVICNSSSSSLVYESNFSILTNAGIEIGVASTKSFTTQLTILLMIAAKINNLKTNDEKIENKVAKTLRLLPEITKNVLKCDSLIYSLAKELSDKNNIIFIGRGHNYPIAMEGALKLKEISYTHAEAYAAGELKHGPLALVDSSTQIIVIAPNDNLIDKIKLNISEIRTRGGVLHIFSDNLTKFNDNTNVIRLPYDGILLSPIIYVIPLQLLAYYVALIKGKNIDKPRNLAKSVTVE.

C2 (nucleophile; for GATase activity) is an active-site residue. A Glutamine amidotransferase type-2 domain is found at C2 to K220. SIS domains follow at residues A289 to N429 and L461 to P600. Residue K605 is the For Fru-6P isomerization activity of the active site.

As to quaternary structure, homodimer.

It localises to the cytoplasm. It carries out the reaction D-fructose 6-phosphate + L-glutamine = D-glucosamine 6-phosphate + L-glutamate. In terms of biological role, catalyzes the first step in hexosamine metabolism, converting fructose-6P into glucosamine-6P using glutamine as a nitrogen source. The sequence is that of Glutamine--fructose-6-phosphate aminotransferase [isomerizing] from Buchnera aphidicola subsp. Baizongia pistaciae (strain Bp).